A 280-amino-acid polypeptide reads, in one-letter code: Fructose-1,6-bisphosphatase class 1 (280 aa).

Positions 64, 83, 85, and 86 each coordinate Mg(2+). Substrate-binding positions include 86–89, Tyr-190, and Lys-221; that span reads DGSS. Mg(2+) is bound at residue Glu-227.

It belongs to the FBPase class 1 family. In terms of assembly, homotetramer. Requires Mg(2+) as cofactor.

The protein localises to the cytoplasm. It carries out the reaction beta-D-fructose 1,6-bisphosphate + H2O = beta-D-fructose 6-phosphate + phosphate. The protein operates within carbohydrate biosynthesis; gluconeogenesis. The sequence is that of Fructose-1,6-bisphosphatase class 1 from Campylobacter hominis (strain ATCC BAA-381 / DSM 21671 / CCUG 45161 / LMG 19568 / NCTC 13146 / CH001A).